A 340-amino-acid polypeptide reads, in one-letter code: Adenosine kinase (340 aa).

The active site involves D292.

It belongs to the carbohydrate kinase PfkB family. It depends on Mg(2+) as a cofactor.

The catalysed reaction is adenosine + ATP = AMP + ADP + H(+). The protein operates within purine metabolism; AMP biosynthesis via salvage pathway; AMP from adenosine: step 1/1. In Schizosaccharomyces pombe (strain 972 / ATCC 24843) (Fission yeast), this protein is Adenosine kinase (ado1).